We begin with the raw amino-acid sequence, 433 residues long: Probable non-inhibitory serpin-Z5 (433 aa).

The segment covering 1 to 12 (MEPKEKKQKLDT) has biased composition (basic and acidic residues). Residues 1 to 43 (MEPKEKKQKLDTSEVASPSLSKTHLKKKKTKKQKIRKSQEITS) are disordered. Basic residues predominate over residues 23–36 (THLKKKKTKKQKIR). Positions 380-404 (GTEAVTFTAFRSAYLGCALVKPIDF) are RCL.

The protein belongs to the serpin family. In terms of tissue distribution, weakly expressed during seedling development.

The chain is Probable non-inhibitory serpin-Z5 from Arabidopsis thaliana (Mouse-ear cress).